The sequence spans 167 residues: Transcription factor 24 (167 aa).

Over residues 1 to 23 the composition is skewed to low complexity; it reads MDRGRPAGSPLSASAEPAPLAAA. Residues 1-60 form a disordered region; that stretch reads MDRGRPAGSPLSASAEPAPLAAAIRDSRPGRTGPGPAGPGGGSRSGSGRPAAANAARERS. Gly residues predominate over residues 32 to 45; it reads TGPGPAGPGGGSRS. Positions 46 to 55 are enriched in low complexity; it reads GSGRPAAANA. The bHLH domain occupies 49–101; the sequence is RPAAANAARERSRVQTLRHAFLELQRTLPSVPPDTKLSKLDVLLLATTYIAHL.

In terms of assembly, efficient DNA binding requires dimerization with another bHLH protein.

It localises to the nucleus. Functionally, putative transcription factor. The protein is Transcription factor 24 (TCF24) of Homo sapiens (Human).